The primary structure comprises 585 residues: uncharacterized protein (585 aa).

The span at 1–18 (MSALSTKLEPTNSYSESL) shows a compositional bias: polar residues. A disordered region spans residues 1–23 (MSALSTKLEPTNSYSESLPPQRR).

The protein belongs to the protein kinase superfamily. ADCK protein kinase family.

This is an uncharacterized protein from Synechocystis sp. (strain ATCC 27184 / PCC 6803 / Kazusa).